Here is a 40-residue protein sequence, read N- to C-terminus: Photosystem II reaction center protein J (40 aa).

The chain crosses the membrane as a helical span at residues 8-28 (IPLWIIGTVAGILVIGLIGIF).

This sequence belongs to the PsbJ family. PSII is composed of 1 copy each of membrane proteins PsbA, PsbB, PsbC, PsbD, PsbE, PsbF, PsbH, PsbI, PsbJ, PsbK, PsbL, PsbM, PsbT, PsbX, PsbY, PsbZ, Psb30/Ycf12, at least 3 peripheral proteins of the oxygen-evolving complex and a large number of cofactors. It forms dimeric complexes.

Its subcellular location is the plastid. It localises to the chloroplast thylakoid membrane. In terms of biological role, one of the components of the core complex of photosystem II (PSII). PSII is a light-driven water:plastoquinone oxidoreductase that uses light energy to abstract electrons from H(2)O, generating O(2) and a proton gradient subsequently used for ATP formation. It consists of a core antenna complex that captures photons, and an electron transfer chain that converts photonic excitation into a charge separation. The sequence is that of Photosystem II reaction center protein J from Oenothera elata subsp. hookeri (Hooker's evening primrose).